The chain runs to 64 residues: Large ribosomal subunit protein bL35 (64 aa).

The span at 1-15 (MPKQKSHSGASKRFR) shows a compositional bias: basic residues. Positions 1-22 (MPKQKSHSGASKRFRVTGSGKV) are disordered.

The protein belongs to the bacterial ribosomal protein bL35 family.

The sequence is that of Large ribosomal subunit protein bL35 from Frankia casuarinae (strain DSM 45818 / CECT 9043 / HFP020203 / CcI3).